A 376-amino-acid chain; its full sequence is MSSSNGRGGAGGVGGSSEHPQYPKVVLVTGACRFLGGYLTARLAQNPLINRVIAVDAIAPSKDMLRRMGRAEFVRADIRNPFIAKVIRNGEVDTVVHAAAASYAPRSGGSAALKELNVMGAMQLFAACQKAPSVRRVVLKSTSEVYGSSPHDPVMFTEDSSSRRPFSQGFPKDSLDIEGYVRALGRRRPDIAVTILRLANMIGPAMDTTLSRYLAGPLVPTIFGRDARLQLLHEQDALGALERAAMAGKAGTFNIGADGILMLSQAIRRAGRIPVPVPGFGVWALDSLRRANHYTELNREQFAYLSYGRVMDTTRMRVELGYQPKWTTVEAFDDYFRGRGLTPIIDPHRVRSWEGRAVGLAQRWGSRNPIPWSGLR.

This sequence belongs to the NAD(P)-dependent epimerase/dehydratase family.

This is an uncharacterized protein from Mycobacterium bovis (strain ATCC BAA-935 / AF2122/97).